We begin with the raw amino-acid sequence, 95 residues long: Cobalt transport protein CbiN (95 aa).

Helical transmembrane passes span 5–25 and 67–87; these read HILM…IYSG and LLFA…FGYY.

The protein belongs to the CbiN family. In terms of assembly, forms an energy-coupling factor (ECF) transporter complex composed of an ATP-binding protein (A component, CbiO), a transmembrane protein (T component, CbiQ) and 2 possible substrate-capture proteins (S components, CbiM and CbiN) of unknown stoichimetry.

Its subcellular location is the cell membrane. Its pathway is cofactor biosynthesis; adenosylcobalamin biosynthesis. In terms of biological role, part of the energy-coupling factor (ECF) transporter complex CbiMNOQ involved in cobalt import. The protein is Cobalt transport protein CbiN of Methanothermobacter thermautotrophicus (strain ATCC 29096 / DSM 1053 / JCM 10044 / NBRC 100330 / Delta H) (Methanobacterium thermoautotrophicum).